A 54-amino-acid polypeptide reads, in one-letter code: UPF0391 membrane protein Aave_3864 (54 aa).

2 consecutive transmembrane segments (helical) span residues 5-25 (AVVF…GIAA) and 28-48 (VGIA…TFVL).

It belongs to the UPF0391 family.

The protein localises to the cell membrane. The polypeptide is UPF0391 membrane protein Aave_3864 (Paracidovorax citrulli (strain AAC00-1) (Acidovorax citrulli)).